We begin with the raw amino-acid sequence, 228 residues long: Protein Iojap, chloroplastic (228 aa).

The segment at 1–54 (MGGTSAAVPSHGLACAPPAAVTLNPRARRRRASSGSGGHRSSPQQPLRSDLLPP) is disordered. A chloroplast-targeting transit peptide spans 1 to 62 (MGGTSAAVPS…PPATVACRAR (62 aa)).

This sequence belongs to the Iojap/RsfS family. Interacts with chloroplast ribosomal protein uL14c (rpl14).

The protein localises to the plastid. Its subcellular location is the chloroplast. In terms of biological role, may be a ribosome silencing factor (Potential). Involved in plastid biogenesis. Plastids affected by a mutation in Iojap lose the ability to perform translation and lack plastid ribosomes. This is Protein Iojap, chloroplastic (Ij) from Zea mays (Maize).